The chain runs to 152 residues: UPF0179 protein Mlab_1307 (152 aa).

It belongs to the UPF0179 family.

The polypeptide is UPF0179 protein Mlab_1307 (Methanocorpusculum labreanum (strain ATCC 43576 / DSM 4855 / Z)).